The sequence spans 334 residues: Beta-hexosaminidase (334 aa).

Residues aspartate 62, arginine 70, arginine 130, and lysine 160–histidine 161 each bind substrate. Histidine 173 (proton donor/acceptor) is an active-site residue. Aspartate 243 serves as the catalytic Nucleophile.

Belongs to the glycosyl hydrolase 3 family. NagZ subfamily.

The protein resides in the cytoplasm. It carries out the reaction Hydrolysis of terminal non-reducing N-acetyl-D-hexosamine residues in N-acetyl-beta-D-hexosaminides.. It participates in cell wall biogenesis; peptidoglycan recycling. Functionally, plays a role in peptidoglycan recycling by cleaving the terminal beta-1,4-linked N-acetylglucosamine (GlcNAc) from peptide-linked peptidoglycan fragments, giving rise to free GlcNAc, anhydro-N-acetylmuramic acid and anhydro-N-acetylmuramic acid-linked peptides. The sequence is that of Beta-hexosaminidase from Photobacterium profundum (strain SS9).